The following is a 140-amino-acid chain: MLTIEDIKKIIPHRYPFLLIDRLEELEDGKRAVGIKNVTVNEDFFNGHFPDYPVMPGVLIVEALAQVGACAILNVEENKGKLAFFAGIDNCRFKEQVKPGDQLRLEVEIVRMKGPVGKGRGVASVNGKTVAETDLMFAIK.

Residue H48 is part of the active site.

It belongs to the thioester dehydratase family. FabZ subfamily.

The protein resides in the cytoplasm. The enzyme catalyses a (3R)-hydroxyacyl-[ACP] = a (2E)-enoyl-[ACP] + H2O. Its function is as follows. Involved in unsaturated fatty acids biosynthesis. Catalyzes the dehydration of short chain beta-hydroxyacyl-ACPs and long chain saturated and unsaturated beta-hydroxyacyl-ACPs. The polypeptide is 3-hydroxyacyl-[acyl-carrier-protein] dehydratase FabZ (Halalkalibacterium halodurans (strain ATCC BAA-125 / DSM 18197 / FERM 7344 / JCM 9153 / C-125) (Bacillus halodurans)).